A 267-amino-acid polypeptide reads, in one-letter code: NAD kinase 2 (267 aa).

Asp-52 serves as the catalytic Proton acceptor. Residues 52 to 53 (DA), 124 to 125 (NE), Arg-151, Asp-153, 164 to 169 (TAYNKS), and Ala-188 contribute to the NAD(+) site.

It belongs to the NAD kinase family. A divalent metal cation is required as a cofactor.

Its subcellular location is the cytoplasm. It carries out the reaction NAD(+) + ATP = ADP + NADP(+) + H(+). In terms of biological role, involved in the regulation of the intracellular balance of NAD and NADP, and is a key enzyme in the biosynthesis of NADP. Catalyzes specifically the phosphorylation on 2'-hydroxyl of the adenosine moiety of NAD to yield NADP. This chain is NAD kinase 2, found in Bacillus cereus (strain ATCC 14579 / DSM 31 / CCUG 7414 / JCM 2152 / NBRC 15305 / NCIMB 9373 / NCTC 2599 / NRRL B-3711).